The sequence spans 218 residues: Translation initiation factor 6 (218 aa).

The protein belongs to the eIF-6 family.

Binds to the 50S ribosomal subunit and prevents its association with the 30S ribosomal subunit to form the 70S initiation complex. This chain is Translation initiation factor 6, found in Methanosarcina acetivorans (strain ATCC 35395 / DSM 2834 / JCM 12185 / C2A).